The sequence spans 337 residues: Protein MICROTUBULE BINDING PROTEIN 2C (337 aa).

Residues 80–147 are disordered; it reads RGSMTYTKMP…STSSLTEKDR (68 aa). Residues 89-103 are compositionally biased toward basic and acidic residues; the sequence is PSRESLYKKTSEVKG. Residues 120–142 are compositionally biased toward polar residues; the sequence is KNVSSSQDGYAENFSTPSSTSSL. 3 coiled-coil regions span residues 143–194, 223–250, and 294–314; these read TEKD…MKKD, VEKL…LQGE, and LQKM…AKEN.

The protein belongs to the microtubule binding protein 2C family. As to quaternary structure, interacts with KN-1. Binds to tobacco mosaic virus movement protein (TMV-MP) at microtubules. Constitutively expressed in leaves.

The protein resides in the cytoplasm. It localises to the cytoskeleton. In terms of biological role, prevents homeodomain proteins (e.g. STM) association to plasmodesmata and, consequently, cell-to-cell transport. Binds to RNA. Alters KN1 RNA-binding capacity. Regulates cytoskeleton (e.g. actin) organization that determinates cell shape. Interferes with cell-to-cell transport of tobacco mosaic virus movement protein (TMV-MP) by mediating its accumulation at microtubules, thus interfering with cell-to-cell virus movement. The polypeptide is Protein MICROTUBULE BINDING PROTEIN 2C (Nicotiana tabacum (Common tobacco)).